A 151-amino-acid polypeptide reads, in one-letter code: MKNKLLFMMLTILGAPGIATATNYDLARSEYNFAVNELSKSSFNQAAIIGQVGTDNSARVRQEGSKLLSVISQEGENNRAKVDQAGNYNFAYIEQTGNANDASISQSAYGNSAAIIQKGSGNKANITQYGTQKTAVVVQKQSHMAIRVTQR.

An N-terminal signal peptide occupies residues 1-21 (MKNKLLFMMLTILGAPGIATA).

The protein belongs to the CsgA/CsgB family.

It localises to the fimbrium. Its function is as follows. Curlin is the structural subunit of the curli. Curli are coiled surface structures that assemble preferentially at growth temperatures below 37 degrees Celsius. Curli can bind to fibronectin. The minor subunit is the nucleation component of curlin monomers. The sequence is that of Minor curlin subunit (csgB) from Salmonella typhi.